Consider the following 125-residue polypeptide: Basic leucine zipper transcriptional factor ATF-like (125 aa).

Low complexity predominate over residues 1–14 (MPHSSDSSDSSFSR). The segment at 1–59 (MPHSSDSSDSSFSRSPPPGKQDSSDDVRKVQRREKNRIAAQKSRQRQTQKADTLHLESE) is disordered. Residues 26-89 (DVRKVQRREK…KYFTSVLSSH (64 aa)) enclose the bZIP domain. The segment at 28 to 50 (RKVQRREKNRIAAQKSRQRQTQK) is basic motif. S43 carries the phosphoserine modification. Residue T48 is modified to Phosphothreonine. Residues 54–75 (LHLESEDLEKQNAALRKEIKQL) form a leucine-zipper region.

It belongs to the bZIP family. Heterodimer; mainly heterodimerizes with JUNB. The BATF-JUNB heterodimer interacts with IRF4 and IRF8. Interacts (via bZIP domain) with IRF4 and IRF8; the interaction is direct. Also forms heterodimers with JUN and JUND. Interacts with IFI35. In terms of processing, phosphorylated on serine and threonine residues and at least one tyrosine residue. Phosphorylation at Ser-43 inhibit DNA binding activity and transforms it as a negative regulator of AP-1 mediated transcription. Detected in postnatal and adult lymphoid tissues such as thymus, spleen and lymph nodes. In thymus most concentrated expression is found in the immediate cortical layer. Differentially expressed during T-cell development in thymus. Highly expressed in Th17, Th1 and Th2 cells and in activated B-cells.

It is found in the nucleus. The protein localises to the cytoplasm. In terms of biological role, AP-1 family transcription factor that controls the differentiation of lineage-specific cells in the immune system: specifically mediates the differentiation of T-helper 17 cells (Th17), follicular T-helper cells (TfH), CD8(+) dendritic cells and class-switch recombination (CSR) in B-cells. Acts via the formation of a heterodimer with JUNB that recognizes and binds DNA sequence 5'-TGA[CG]TCA-3'. The BATF-JUNB heterodimer also forms a complex with IRF4 (or IRF8) in immune cells, leading to recognition of AICE sequence (5'-TGAnTCA/GAAA-3'), an immune-specific regulatory element, followed by cooperative binding of BATF and IRF4 (or IRF8) and activation of genes. Controls differentiation of T-helper cells producing interleukin-17 (Th17 cells) by binding to Th17-associated gene promoters: regulates expression of the transcription factor RORC itself and RORC target genes such as IL17 (IL17A or IL17B). Also involved in differentiation of follicular T-helper cells (TfH) by directing expression of BCL6 and MAF. In B-cells, involved in class-switch recombination (CSR) by controlling the expression of both AICDA and of germline transcripts of the intervening heavy-chain region and constant heavy-chain region (I(H)-C(H)). Following infection, can participate in CD8(+) dendritic cell differentiation via interaction with IRF4 and IRF8 to mediate cooperative gene activation. Regulates effector CD8(+) T-cell differentiation by regulating expression of SIRT1. Following DNA damage, part of a differentiation checkpoint that limits self-renewal of hematopoietic stem cells (HSCs): up-regulated by STAT3, leading to differentiation of HSCs, thereby restricting self-renewal of HSCs. The sequence is that of Basic leucine zipper transcriptional factor ATF-like (Batf) from Mus musculus (Mouse).